We begin with the raw amino-acid sequence, 287 residues long: Ribosomal RNA small subunit methyltransferase I (287 aa).

This sequence belongs to the methyltransferase superfamily. RsmI family.

The protein localises to the cytoplasm. The enzyme catalyses cytidine(1402) in 16S rRNA + S-adenosyl-L-methionine = 2'-O-methylcytidine(1402) in 16S rRNA + S-adenosyl-L-homocysteine + H(+). Functionally, catalyzes the 2'-O-methylation of the ribose of cytidine 1402 (C1402) in 16S rRNA. The protein is Ribosomal RNA small subunit methyltransferase I of Streptococcus pyogenes serotype M6 (strain ATCC BAA-946 / MGAS10394).